The chain runs to 460 residues: MSFTFAIIGRPNVGKSTLFNRLVGQKLALVDDTPGVTRDRREGEGRLGDLEFTLIDTAGLDEGAKGSLTERMQQQTETAIELADALMFVFDARAGLTPNDRAFADFARRANKPVILVANKSEGKAGEIGAMESYALGLGDPVQISAEHGEGLSELYDAFRALMPEPDEEAEEDDDVEGLTEEEFSKRPIRVAIVGRPNAGKSTMINHLLGEERLLTSPEAGTTRDSIAVSVDYKGRQFRIFDTAGLRRRSRIEEKLEKLSVADALRAVRFAEVVVLMLDAQTKFEEQDLRIADLIEREGRALVIAVNKWDLVERHPGQIGALRTEADHWLPQVKGVPIVAVSGLMGEGIDRLMSAIEDSYATWNRRVPTAALNRWFEQAIQTNPPPAVSGRRLKLNYVTQAKARPPSFIVFCSRADAVPESYLRYLVNSLRNYFELPGTPVRIMLREKANPFAHKRKRPS.

2 EngA-type G domains span residues 3–167 (FTFA…PEPD) and 189–364 (IRVA…ATWN). GTP is bound by residues 9-16 (GRPNVGKS), 56-60 (DTAGL), 119-122 (NKSE), 195-202 (GRPNAGKS), 242-246 (DTAGL), and 307-310 (NKWD). The KH-like domain occupies 365-449 (RRVPTAALNR…PVRIMLREKA (85 aa)).

The protein belongs to the TRAFAC class TrmE-Era-EngA-EngB-Septin-like GTPase superfamily. EngA (Der) GTPase family. In terms of assembly, associates with the 50S ribosomal subunit.

Its function is as follows. GTPase that plays an essential role in the late steps of ribosome biogenesis. This Rhodopseudomonas palustris (strain BisA53) protein is GTPase Der.